A 493-amino-acid chain; its full sequence is Cytoplasmic tRNA 2-thiolation protein 2 (493 aa).

S489 is subject to Phosphoserine.

It belongs to the CTU2/NCS2 family. Interacts with NCS6 and URM1. May act by forming a heterodimer with NCS6.

It localises to the cytoplasm. Its pathway is tRNA modification; 5-methoxycarbonylmethyl-2-thiouridine-tRNA biosynthesis. Its function is as follows. Plays a central role in 2-thiolation of mcm(5)S(2)U at tRNA wobble positions of tRNA(Lys), tRNA(Glu) and tRNA(Gln). May act by forming a heterodimer with NCS6 that ligates sulfur from thiocarboxylated URM1 onto the uridine of tRNAs at wobble position. Prior mcm(5) tRNA modification by the elongator complex is required for 2-thiolation. May also be involved in protein urmylation. This chain is Cytoplasmic tRNA 2-thiolation protein 2, found in Saccharomyces cerevisiae (strain YJM789) (Baker's yeast).